Consider the following 447-residue polypeptide: Argininosuccinate synthase (447 aa).

ATP contacts are provided by residues 17-25 (AFSGGLDTS) and alanine 43. An L-citrulline-binding site is contributed by tyrosine 99. 2 residues coordinate ATP: glycine 129 and threonine 131. L-aspartate contacts are provided by threonine 131, asparagine 135, and aspartate 136. Asparagine 135 provides a ligand contact to L-citrulline. Aspartate 136 is an ATP binding site. Residues arginine 139 and serine 192 each coordinate L-citrulline. Residue aspartate 194 coordinates ATP. L-citrulline is bound by residues threonine 201, glutamate 203, and glutamate 280.

The protein belongs to the argininosuccinate synthase family. Type 2 subfamily. In terms of assembly, homotetramer.

Its subcellular location is the cytoplasm. The catalysed reaction is L-citrulline + L-aspartate + ATP = 2-(N(omega)-L-arginino)succinate + AMP + diphosphate + H(+). Its pathway is amino-acid biosynthesis; L-arginine biosynthesis; L-arginine from L-ornithine and carbamoyl phosphate: step 2/3. The chain is Argininosuccinate synthase from Shigella flexneri serotype 5b (strain 8401).